Reading from the N-terminus, the 193-residue chain is Small ribosomal subunit protein uS7 (193 aa).

It belongs to the universal ribosomal protein uS7 family. Part of the 30S ribosomal subunit.

Functionally, one of the primary rRNA binding proteins, it binds directly to 16S rRNA where it nucleates assembly of the head domain of the 30S subunit. Is located at the subunit interface close to the decoding center. This is Small ribosomal subunit protein uS7 from Saccharolobus solfataricus (strain ATCC 35092 / DSM 1617 / JCM 11322 / P2) (Sulfolobus solfataricus).